The sequence spans 206 residues: Small ribosomal subunit protein uS4 (206 aa).

The 61-residue stretch at R96–K156 folds into the S4 RNA-binding domain.

This sequence belongs to the universal ribosomal protein uS4 family. In terms of assembly, part of the 30S ribosomal subunit. Contacts protein S5. The interaction surface between S4 and S5 is involved in control of translational fidelity.

One of the primary rRNA binding proteins, it binds directly to 16S rRNA where it nucleates assembly of the body of the 30S subunit. Functionally, with S5 and S12 plays an important role in translational accuracy. In Buchnera aphidicola subsp. Schizaphis graminum (strain Sg), this protein is Small ribosomal subunit protein uS4.